The chain runs to 647 residues: Centrosomal protein of 72 kDa (647 aa).

LRR repeat units lie at residues 29-50 (ELQS…GHSL), 55-76 (GLKS…QYLT), and 77-98 (ALES…FRLH). Residues 111–150 (NPVVKVEPDYRLFVVHLLPKLQQLDDRPVRASERKASRLH) enclose the LRRCT domain. Basic and acidic residues-rich tracts occupy residues 152–161 (ASEDSLDSKE) and 220–234 (KGRE…ESRH). 3 disordered regions span residues 152-176 (ASED…HHPR), 211-256 (PPGS…RETR), and 285-413 (PEAS…ALPG). Ser-237 is modified (phosphoserine). Residues 366–377 (SLSRQDSSESRN) show a composition bias toward basic and acidic residues. Residue Ser-382 is modified to Phosphoserine. A compositionally biased stretch (basic and acidic residues) spans 390-402 (EEQRSRGVTDTRE). Phosphoserine is present on Ser-404. Residues 476–620 (SLALESKSLQ…AQHRAEVEQM (145 aa)) adopt a coiled-coil conformation.

This sequence belongs to the CEP72 family. Interacts with KIZ, PCM1 and CDK5RAP2.

Its subcellular location is the cytoplasm. The protein resides in the cytoskeleton. The protein localises to the microtubule organizing center. It is found in the centrosome. It localises to the centriolar satellite. In terms of biological role, involved in the recruitment of key centrosomal proteins to the centrosome. Provides centrosomal microtubule-nucleation activity on the gamma-tubulin ring complexes (gamma-TuRCs) and has critical roles in forming a focused bipolar spindle, which is needed for proper tension generation between sister chromatids. Required for localization of KIZ, AKAP9 and gamma-tubulin ring complexes (gamma-TuRCs). Involved in centriole duplication. Required for CDK5RAP22, CEP152, WDR62 and CEP63 centrosomal localization and promotes the centrosomal localization of CDK2. The chain is Centrosomal protein of 72 kDa (CEP72) from Homo sapiens (Human).